The following is a 218-amino-acid chain: uncharacterized protein (218 aa).

Residues 4-207 form the CN hydrolase domain; the sequence is WKVAAAQYEP…SLLLVGQRSS (204 aa).

This is an uncharacterized protein from Escherichia coli (strain K12).